The primary structure comprises 616 residues: FAD-linked oxidoreductase cheF (616 aa).

The FAD-binding PCMH-type domain occupies 160–344 (NQGLVSPWYV…LSMTVRVEPA (185 aa)).

This sequence belongs to the oxygen-dependent FAD-linked oxidoreductase family. FAD serves as cofactor.

It participates in secondary metabolite biosynthesis. Its function is as follows. FAD-linked oxidoreductase; part of the gene cluster that mediates the biosynthesis of chaetoglobosin A which has a unique inhibitory activity against actin polymerization in mammalian cells. Chaetoglobosin A and its intermediates are involved in the morphological differentiation of C.globosum. The first step of the pathway is the synthesis of prochaetoglobosin I via condensation of one acetyl-CoA, 8 malonyl-CoA, and a L-tryptophan molecule by the PKS-NRPS hybrid synthetase cheA, followed by reduction of backbone double bond to install desired geometry by the enoyl reductase cheB. Further multiple oxidation steps performed by the cytochrome P450 monooxygenases cheE and cheG, as well as by the FAD-linked oxidoreductase cheF, lead to the formation of chaetoglobosin A. Depending on the order of action of these reductases, distinct intermediates can be identified. Within the pathway, the cytochrome P450 monooxygenase cheE catalyzes a stereospecific epoxidation on prochaetoglobosin I, cytoglobosin D, and chaetoglobosin J intermediates. The FAD-linked oxidoreductase cheF performs dehydrogenation of the C-20 hydroxyl groups in the 20-dihyrochaetoglobosin A and cytoglobosin D intermediates. Finally, the cytochrome P450 monooxygenase cheG can catalyze the stereospecific dihydroxylation of prochaetoglobosin I and prochaetoglobosin IV at C-19 and C-20, respectively. The Diels-Alderase cheD may play a role in the post-PKS-NRPS biosynthetic steps catalyzing Diels-Alder cyclization. The sequence is that of FAD-linked oxidoreductase cheF from Chaetomium globosum (strain ATCC 6205 / CBS 148.51 / DSM 1962 / NBRC 6347 / NRRL 1970) (Soil fungus).